A 398-amino-acid chain; its full sequence is Calreticulin (398 aa).

A signal peptide spans 1 to 19 (MKAVVLVVVSLLALSSINC). The tract at residues 20 to 197 (DVFFEEKFPD…NEKVESGDLE (178 aa)) is N-domain. Cys105 and Cys137 form a disulfide bridge. Positions 109, 111, 128, and 135 each coordinate an alpha-D-glucoside. 7 consecutive repeat copies span residues 191–202 (VESGDLEADWDF), 210–221 (DPEAKKPEDWDD), 227–238 (DPEDKKPEDWDK), 244–255 (DPDATKPEDWDD), 259–269 (GEWEPPMIDNP), 273–283 (GVWAPKQIDNP), and 287–297 (GPWVHPEIDNP). Residues 191–255 (VESGDLEADW…DATKPEDWDD (65 aa)) form a 4 X approximate repeats region. Residues 198–308 (ADWDFLPNKK…YTPDSNLYKR (111 aa)) form a P-domain region. Residues 207–251 (KIKDPEAKKPEDWDDKPTIPDPEDKKPEDWDKPEHIPDPDATKPE) are compositionally biased toward basic and acidic residues. Residues 207-257 (KIKDPEAKKPEDWDDKPTIPDPEDKKPEDWDKPEHIPDPDATKPEDWDDEM) form a disordered region. Residues 259–297 (GEWEPPMIDNPDYKGVWAPKQIDNPAYKGPWVHPEIDNP) form a 3 X approximate repeats region. The segment at 309 to 398 (DEICAVGLDL…AAPVEEHDEL (90 aa)) is C-domain. Asp317 serves as a coordination point for an alpha-D-glucoside. A disordered region spans residues 334 to 398 (DDPAAAKERG…AAPVEEHDEL (65 aa)). Basic and acidic residues predominate over residues 337–372 (AAAKERGEVIKKRQEGEKKMKSEQDEAEREKEKAEK). The span at 373 to 387 (PDDEEDDEDLDDETG) shows a compositional bias: acidic residues. Positions 395 to 398 (HDEL) match the Prevents secretion from ER motif.

Belongs to the calreticulin family. In terms of assembly, monomer. As to expression, expressed in fat bodies. Not expressed in midgut, silk gland, ovary or testis.

The protein localises to the endoplasmic reticulum lumen. In terms of biological role, molecular calcium-binding chaperone promoting folding, oligomeric assembly and quality control in the ER via the calreticulin/calnexin cycle. This lectin may interact transiently with almost all of the monoglucosylated glycoproteins that are synthesized in the ER. This chain is Calreticulin, found in Bombyx mori (Silk moth).